The sequence spans 48 residues: MTNKNDGKDMRKNAPKGAQPGQPEPLSGSKKVKNRNHTRQKHNSSHDM.

Basic and acidic residues predominate over residues 1–12 (MTNKNDGKDMRK). Residues 1 to 48 (MTNKNDGKDMRKNAPKGAQPGQPEPLSGSKKVKNRNHTRQKHNSSHDM) form a disordered region. Residues 30–48 (KKVKNRNHTRQKHNSSHDM) show a composition bias toward basic residues.

This sequence belongs to the SspP family.

It is found in the spore core. This chain is Small, acid-soluble spore protein P, found in Bacillus licheniformis (strain ATCC 14580 / DSM 13 / JCM 2505 / CCUG 7422 / NBRC 12200 / NCIMB 9375 / NCTC 10341 / NRRL NRS-1264 / Gibson 46).